Reading from the N-terminus, the 959-residue chain is General vesicular transport factor p115 (959 aa).

Residues 1 to 637 form a globular head region; that stretch reads MNFLRGVMGG…IYKSSEEDKK (637 aa). ARM repeat units lie at residues 20–60, 61–121, 123–163, 166–207, 208–253, 255–310, 311–354, 363–408, 420–459, 473–513, 518–571, and 573–630; these read AETI…VGIQ, AMEH…IKQP, NVTL…IILV, MGVS…VAFE, NAFE…FKEG, YIQR…MFQC, GLLQ…FASV, PAIV…ATLL, SAGQ…EQLL, SLLQ…THFL, NVPF…IEKR, and GKEN…AIYK. Ser-50 carries the phosphoserine modification. Lys-202 bears the N6-acetyllysine mark. A coiled-coil region spans residues 638-930; the sequence is EEEVKKTLEQ…LSLKSKLKDL (293 aa). The tract at residues 925 to 959 is disordered; the sequence is SKLKDLGHPVEEEDESGDQEDDDDELDDGDRDQDI. Residues 935–959 show a composition bias toward acidic residues; the sequence is EEEDESGDQEDDDDELDDGDRDQDI. Ser-940 bears the Phosphoserine mark.

Belongs to the VDP/USO1/EDE1 family. As to quaternary structure, homodimer. Dimerizes by parallel association of the tails, resulting in an elongated structure with two globular head domains side by side, and a long rod-like tail structure. Interacts with MIF. Interacts with GM130/GOLGA2; interaction is disrupted upon phosphorylation of GM130/GOLGA2 by CDK1 at the onset of mitosis. In terms of processing, phosphorylated in a cell cycle-specific manner; phosphorylated in interphase but not in mitotic cells. Dephosphorylated protein associates with the Golgi membrane; phosphorylation promostes dissociation.

The protein localises to the cytoplasm. It is found in the cytosol. The protein resides in the golgi apparatus membrane. Functionally, general vesicular transport factor required for intercisternal transport in the Golgi stack; it is required for transcytotic fusion and/or subsequent binding of the vesicles to the target membrane. May well act as a vesicular anchor by interacting with the target membrane and holding the vesicular and target membranes in proximity. The protein is General vesicular transport factor p115 (Uso1) of Rattus norvegicus (Rat).